A 598-amino-acid chain; its full sequence is Arylsulfate sulfotransferase AssT (598 aa).

A signal peptide spans 1-27 (MFHPYRKTLLSGTVALALGLFATGAIA). 4-methylumbelliferone contacts are provided by H279 and H383. Cysteines 445 and 451 form a disulfide. 4-methylumbelliferone is bound at residue H463. The Nucleophile; sulfurylated histidine covalent intermediate role is filled by H463.

This sequence belongs to the aryl sulfotransferase family. In terms of assembly, monomer.

Its subcellular location is the periplasm. The catalysed reaction is an aryl sulfate + a phenol = an aryl sulfate + a phenol. The enzyme catalyses 4-methylumbelliferone sulfate + phenol = phenyl sulfate + 4-methylumbelliferone. It carries out the reaction 2-naphthyl sulfate + phenol = phenyl sulfate + 2-naphthol. In terms of biological role, catalyzes the transfer of a sulfate group from a phenyl sulfate ester to other phenolic compounds. Is able to use several substrate donors and acceptors in vitro: using phenol as an acceptor substrate, 4-methylumbelliferyl sulfate is the best donor substrate, followed by beta-naphthyl sulfate, p-nitrophenyl sulfate (PNS), and alpha-naphthyl sulfate; using PNS as a donor substrate, alpha-naphthol is the best acceptor substrate, followed by phenol, resorcinol, p-acetaminophen, tyramine, and tyrosine. Cannot use 3'-phosphoadenosine-5'-phophosulfate (PAPS), the donor substrate of mammalian sulfotransferase. May be a detoxifying enzyme, converting toxic phenolic compounds into non-toxic materials. The polypeptide is Arylsulfate sulfotransferase AssT (Lelliottia amnigena (Enterobacter amnigenus)).